The chain runs to 35 residues: Cupiennin-1b (35 aa).

The residue at position 35 (glutamate 35) is a Glutamic acid 1-amide.

This sequence belongs to the cationic peptide 04 (cupiennin) family. 01 subfamily. Expressed by the venom gland.

It localises to the secreted. Has antimicrobial activity against E.coli, E.faecalis, P.aeruginosa, and S.aureus. Has insecticidal and hemolytic activities. Probably acts by disturbing membrane function with its amphipathic structure. This is Cupiennin-1b from Cupiennius salei (American wandering spider).